A 159-amino-acid polypeptide reads, in one-letter code: 2-C-methyl-D-erythritol 2,4-cyclodiphosphate synthase (159 aa).

Residues aspartate 8 and histidine 10 each contribute to the a divalent metal cation site. Residues 8 to 10 and 34 to 35 contribute to the 4-CDP-2-C-methyl-D-erythritol 2-phosphate site; these read DVH and HS. Position 42 (histidine 42) interacts with a divalent metal cation. Residues 56–58, 61–65, 100–106, 132–135, phenylalanine 139, and arginine 142 contribute to the 4-CDP-2-C-methyl-D-erythritol 2-phosphate site; these read DIG, FPDTD, AQAPKML, and TTTE.

It belongs to the IspF family. As to quaternary structure, homotrimer. The cofactor is a divalent metal cation.

The catalysed reaction is 4-CDP-2-C-methyl-D-erythritol 2-phosphate = 2-C-methyl-D-erythritol 2,4-cyclic diphosphate + CMP. It participates in isoprenoid biosynthesis; isopentenyl diphosphate biosynthesis via DXP pathway; isopentenyl diphosphate from 1-deoxy-D-xylulose 5-phosphate: step 4/6. In terms of biological role, involved in the biosynthesis of isopentenyl diphosphate (IPP) and dimethylallyl diphosphate (DMAPP), two major building blocks of isoprenoid compounds. Catalyzes the conversion of 4-diphosphocytidyl-2-C-methyl-D-erythritol 2-phosphate (CDP-ME2P) to 2-C-methyl-D-erythritol 2,4-cyclodiphosphate (ME-CPP) with a corresponding release of cytidine 5-monophosphate (CMP). This is 2-C-methyl-D-erythritol 2,4-cyclodiphosphate synthase from Salmonella dublin (strain CT_02021853).